Here is a 315-residue protein sequence, read N- to C-terminus: Protoheme IX farnesyltransferase (315 aa).

9 helical membrane-spanning segments follow: residues 21–41 (YFALLKPRVMSLVVFTALVGL), 52–74 (VGFCAILFIAVGAGASGALNMWW), 98–118 (GEALALGLGLSGLSVVMLALA), 121–141 (LLAAGLLAFTIFFYAVVYSMW), 150–170 (IVIGGAAGAFPPMIGWVAATG), 177–197 (VLMFALIFMWTPPHFWALALF), 223–243 (ILVYTVLLVPVALGLALTPVA), 246–266 (LYLATALVLNAIFLKGAWDIW), and 284–304 (FFKFSLLYLALHFTALLAEAI).

This sequence belongs to the UbiA prenyltransferase family. Protoheme IX farnesyltransferase subfamily. As to quaternary structure, interacts with CtaA.

It localises to the cell inner membrane. The enzyme catalyses heme b + (2E,6E)-farnesyl diphosphate + H2O = Fe(II)-heme o + diphosphate. Its pathway is porphyrin-containing compound metabolism; heme O biosynthesis; heme O from protoheme: step 1/1. In terms of biological role, converts heme B (protoheme IX) to heme O by substitution of the vinyl group on carbon 2 of heme B porphyrin ring with a hydroxyethyl farnesyl side group. The protein is Protoheme IX farnesyltransferase of Dinoroseobacter shibae (strain DSM 16493 / NCIMB 14021 / DFL 12).